Reading from the N-terminus, the 64-residue chain is Small ribosomal subunit protein bS21 (64 aa).

A disordered region spans residues 39-64; the sequence is EKPSVKRKKKALAAKKRAVKKARKSF. Positions 43–64 are enriched in basic residues; that stretch reads VKRKKKALAAKKRAVKKARKSF.

Belongs to the bacterial ribosomal protein bS21 family.

The protein is Small ribosomal subunit protein bS21 (rpsU) of Myxococcus xanthus.